Reading from the N-terminus, the 180-residue chain is Geminin homolog (180 aa).

Residues 1–27 show a composition bias toward polar residues; the sequence is MSRIGLQQLNNSARNSPFGSEKATGTK. The disordered stretch occupies residues 1–29; the sequence is MSRIGLQQLNNSARNSPFGSEKATGTKQI.

It belongs to the geminin family. In terms of assembly, homodimer. Interacts with cdt-1; the interaction most likely inhibits the ability of cdt-1 to load the mini-chromosome maintenance (MCM) complex onto DNA and therefore reduces DNA replication licensing activity. Interacts with nob-1 and ceh-32.

It is found in the cytoplasm. The protein localises to the nucleus. Its function is as follows. Inhibits DNA replication by binding to the DNA replication licensing factor cdt-1. Its interaction with cdt-1 prevents the cdt-1 loading of the mini-chromosome maintenance (MCM) complex onto DNA and therefore DNA replication licencing. In Caenorhabditis elegans, this protein is Geminin homolog.